Here is a 518-residue protein sequence, read N- to C-terminus: Stage V sporulation protein B (518 aa).

Transmembrane regions (helical) follow at residues 6–26 (FLKGTLILIAAGMVTRMLGFV), 45–65 (MAAPTFFLATTLTQFGLPVAI), 91–111 (ITGVLSLIFTPLFLFFAPVMA), 120–140 (TLYPLLAITPVVPIIAISSVL), 165–185 (ISLVAVCTTIFLPYGIEYAAA), 186–206 (GAMLSSVAGELASLLYLFVCF), 250–270 (WFFEPIVVAQSLAIAGVATVA), 281–301 (FAMTLLTLPSFITYSLSTALV), 326–346 (LCLLSGGISVVILFVFADELM), 348–368 (VMYGSSGAAVFIKVMAPFFLL), 387–407 (AAMMNSLIGALVKTGLIFVLA), 411–431 (SLGIMGAALAIVTGMVLVTLL), 446–466 (IKEYALSFAVIVICGFISSAI), and 478–498 (VNLAGWIAASAAIYMILLLVF).

It belongs to the polysaccharide synthase family.

The protein localises to the cell membrane. In terms of biological role, involved, directly or indirectly, in spore cortex biosynthesis. Affects only indirectly the expression of late sporulation genes. This is Stage V sporulation protein B (spoVB) from Bacillus subtilis (strain 168).